Here is a 321-residue protein sequence, read N- to C-terminus: GTP 3',8-cyclase (321 aa).

In terms of domain architecture, Radical SAM core spans 5-227; sequence SYDRVVDYLR…DEGYDGASPS (223 aa). Residue Arg14 coordinates GTP. The [4Fe-4S] cluster site is built by Cys21 and Cys25. Position 27 (Tyr27) interacts with S-adenosyl-L-methionine. Residue Cys28 coordinates [4Fe-4S] cluster. Arg64 is a GTP binding site. Gly68 contributes to the S-adenosyl-L-methionine binding site. Thr95 contacts GTP. Ser119 provides a ligand contact to S-adenosyl-L-methionine. A GTP-binding site is contributed by Lys155. An S-adenosyl-L-methionine-binding site is contributed by Met189. [4Fe-4S] cluster is bound by residues Cys249 and Cys252. 254–256 contacts GTP; sequence RIR. Position 266 (Cys266) interacts with [4Fe-4S] cluster.

It belongs to the radical SAM superfamily. MoaA family. In terms of assembly, monomer and homodimer. It depends on [4Fe-4S] cluster as a cofactor.

The enzyme catalyses GTP + AH2 + S-adenosyl-L-methionine = (8S)-3',8-cyclo-7,8-dihydroguanosine 5'-triphosphate + 5'-deoxyadenosine + L-methionine + A + H(+). Its pathway is cofactor biosynthesis; molybdopterin biosynthesis. Its function is as follows. Catalyzes the cyclization of GTP to (8S)-3',8-cyclo-7,8-dihydroguanosine 5'-triphosphate. This chain is GTP 3',8-cyclase, found in Sulfurimonas denitrificans (strain ATCC 33889 / DSM 1251) (Thiomicrospira denitrificans (strain ATCC 33889 / DSM 1251)).